The following is a 231-amino-acid chain: Two-component response regulator ORR1 (231 aa).

One can recognise a Response regulatory domain in the interval arginine 9–proline 135. Position 68 is a 4-aspartylphosphate (aspartate 68).

Belongs to the ARR family. Type-A subfamily. Post-translationally, two-component system major event consists of a His-to-Asp phosphorelay between a sensor histidine kinase (HK) and a response regulator (RR). In plants, the His-to-Asp phosphorelay involves an additional intermediate named Histidine-containing phosphotransfer protein (HPt). This multistep phosphorelay consists of a His-Asp-His-Asp sequential transfer of a phosphate group between first a His and an Asp of the HK protein, followed by the transfer to a conserved His of the HPt protein and finally the transfer to an Asp in the receiver domain of the RR protein. Expressed in roots, leaf blades, leaf sheaths, shoot apex, flowers and panicles.

Functions as a response regulator involved in His-to-Asp phosphorelay signal transduction system. Phosphorylation of the Asp residue in the receiver domain activates the ability of the protein to promote the transcription of target genes. Type-A response regulators seem to act as negative regulators of the cytokinin signaling. Involved in adventitious (crown) root initiation under the regulation of CRL5. In Oryza sativa subsp. japonica (Rice), this protein is Two-component response regulator ORR1.